Consider the following 242-residue polypeptide: Type III pantothenate kinase (242 aa).

Residue D5–K12 coordinates ATP. Substrate-binding positions include Y94 and G100–R103. The active-site Proton acceptor is D102. Residue T124 coordinates ATP. T175 is a substrate binding site.

This sequence belongs to the type III pantothenate kinase family. In terms of assembly, homodimer. Requires NH4(+) as cofactor. K(+) is required as a cofactor.

Its subcellular location is the cytoplasm. It catalyses the reaction (R)-pantothenate + ATP = (R)-4'-phosphopantothenate + ADP + H(+). The protein operates within cofactor biosynthesis; coenzyme A biosynthesis; CoA from (R)-pantothenate: step 1/5. Its function is as follows. Catalyzes the phosphorylation of pantothenate (Pan), the first step in CoA biosynthesis. The sequence is that of Type III pantothenate kinase from Psychrobacter cryohalolentis (strain ATCC BAA-1226 / DSM 17306 / VKM B-2378 / K5).